A 435-amino-acid chain; its full sequence is Proline--tRNA ligase (435 aa).

Belongs to the class-II aminoacyl-tRNA synthetase family. ProS type 2 subfamily. As to quaternary structure, homodimer.

It is found in the cytoplasm. It carries out the reaction tRNA(Pro) + L-proline + ATP = L-prolyl-tRNA(Pro) + AMP + diphosphate. Catalyzes the attachment of proline to tRNA(Pro) in a two-step reaction: proline is first activated by ATP to form Pro-AMP and then transferred to the acceptor end of tRNA(Pro). The chain is Proline--tRNA ligase from Rhodospirillum rubrum (strain ATCC 11170 / ATH 1.1.1 / DSM 467 / LMG 4362 / NCIMB 8255 / S1).